The primary structure comprises 97 residues: Large ribosomal subunit protein uL23 (97 aa).

Belongs to the universal ribosomal protein uL23 family. As to quaternary structure, part of the 50S ribosomal subunit. Contacts protein L29, and trigger factor when it is bound to the ribosome.

Its function is as follows. One of the early assembly proteins it binds 23S rRNA. One of the proteins that surrounds the polypeptide exit tunnel on the outside of the ribosome. Forms the main docking site for trigger factor binding to the ribosome. The protein is Large ribosomal subunit protein uL23 of Brucella melitensis biotype 2 (strain ATCC 23457).